A 219-amino-acid chain; its full sequence is Uracil phosphoribosyltransferase 1 (219 aa).

GTP-binding positions include Arg33, Arg42, and 76–79 (DGRI). Arg86 lines the 5-phospho-alpha-D-ribose 1-diphosphate pocket. Arg103 serves as a coordination point for GTP. 5-phospho-alpha-D-ribose 1-diphosphate is bound at residue Arg111. Residue Arg132 coordinates GTP. 5-phospho-alpha-D-ribose 1-diphosphate is bound by residues Asp138 and 138–146 (DPMLATGGS). Tyr202 provides a ligand contact to D-ribose 5-phosphate. Uracil is bound by residues Ile203 and 208-210 (GDF). Asp209 is a 5-phospho-alpha-D-ribose 1-diphosphate binding site.

Belongs to the UPRTase family. Mg(2+) serves as cofactor.

The enzyme catalyses UMP + diphosphate = 5-phospho-alpha-D-ribose 1-diphosphate + uracil. It functions in the pathway pyrimidine metabolism; UMP biosynthesis via salvage pathway; UMP from uracil: step 1/1. Allosterically activated by GTP. In terms of biological role, catalyzes the conversion of uracil and 5-phospho-alpha-D-ribose 1-diphosphate (PRPP) to UMP and diphosphate. The protein is Uracil phosphoribosyltransferase 1 of Schizosaccharomyces pombe (strain 972 / ATCC 24843) (Fission yeast).